Reading from the N-terminus, the 226-residue chain is Ribose-5-phosphate isomerase A (226 aa).

Substrate contacts are provided by residues 28 to 31 (TGST), 80 to 83 (DGAD), and 93 to 96 (KGGG). Glu102 (proton acceptor) is an active-site residue. Position 120 (Lys120) interacts with substrate.

It belongs to the ribose 5-phosphate isomerase family. As to quaternary structure, homodimer.

The enzyme catalyses aldehydo-D-ribose 5-phosphate = D-ribulose 5-phosphate. The protein operates within carbohydrate degradation; pentose phosphate pathway; D-ribose 5-phosphate from D-ribulose 5-phosphate (non-oxidative stage): step 1/1. In terms of biological role, catalyzes the reversible conversion of ribose-5-phosphate to ribulose 5-phosphate. The protein is Ribose-5-phosphate isomerase A of Caulobacter sp. (strain K31).